A 252-amino-acid chain; its full sequence is Cell division protein ZapD (252 aa).

This sequence belongs to the ZapD family. As to quaternary structure, interacts with FtsZ.

Its subcellular location is the cytoplasm. In terms of biological role, cell division factor that enhances FtsZ-ring assembly. Directly interacts with FtsZ and promotes bundling of FtsZ protofilaments, with a reduction in FtsZ GTPase activity. The sequence is that of Cell division protein ZapD from Cupriavidus pinatubonensis (strain JMP 134 / LMG 1197) (Cupriavidus necator (strain JMP 134)).